Here is a 395-residue protein sequence, read N- to C-terminus: Probable hercynylcysteine sulfoxide lyase (395 aa).

The tract at residues 1 to 21 (MQDEAMRRSGANSPAGDSLAD) is disordered. Lys-220 bears the N6-(pyridoxal phosphate)lysine mark.

This sequence belongs to the class-V pyridoxal-phosphate-dependent aminotransferase family. EgtE subfamily. The cofactor is pyridoxal 5'-phosphate.

The enzyme catalyses S-(hercyn-2-yl)-L-cysteine S-oxide + AH2 + H(+) = ergothioneine + pyruvate + A + NH4(+). It participates in amino-acid biosynthesis; ergothioneine biosynthesis. Functionally, probably catalyzes the conversion of hercynylcysteine sulfoxide to ergothioneine. ERG is one of the major redox buffers which protects bacteria against redox stressors and antibiotics; loss of ERG or mycothiol (MSH, the other major redox buffer in this bacteria) leads to respiratory alterations and bioenergetic deficiencies that negatively impact virulence. This is Probable hercynylcysteine sulfoxide lyase from Mycobacterium tuberculosis (strain CDC 1551 / Oshkosh).